The following is a 239-amino-acid chain: 6-phosphogluconolactonase (239 aa).

This sequence belongs to the glucosamine/galactosamine-6-phosphate isomerase family. 6-phosphogluconolactonase subfamily.

It catalyses the reaction 6-phospho-D-glucono-1,5-lactone + H2O = 6-phospho-D-gluconate + H(+). It participates in carbohydrate degradation; pentose phosphate pathway; D-ribulose 5-phosphate from D-glucose 6-phosphate (oxidative stage): step 2/3. In terms of biological role, hydrolysis of 6-phosphogluconolactone to 6-phosphogluconate. This Xylella fastidiosa (strain 9a5c) protein is 6-phosphogluconolactonase (pgl).